The sequence spans 594 residues: Golgi-associated RAB2 interactor protein 4 (594 aa).

A disordered region spans residues 390-525; it reads AAGLPVSTRQ…SSGSSKRLGR (136 aa). Residues 396–406 are compositionally biased toward polar residues; sequence STRQSKSSLSG. Composition is skewed to basic and acidic residues over residues 408–433, 442–455, and 468–477; these read HGRE…DKAL, TGES…DKIA, and ASRDGKKEKG. The span at 510–521 shows a compositional bias: low complexity; sequence RSSSTTSSGSSK.

This sequence belongs to the GARIN family. In terms of assembly, interacts (via N-terminus) with RAB2B (in GTP-bound form).

It localises to the golgi apparatus. Functionally, RAB2B effector protein required for the compacted Golgi morphology, probably through interaction with small GTPase RAB2B. This is Golgi-associated RAB2 interactor protein 4 (GARIN4) from Macaca fascicularis (Crab-eating macaque).